The sequence spans 148 residues: Truncated transcription factor CAULIFLOWER C (148 aa).

The MADS-box domain occupies 1–61 (MGRGRVEMKR…GKLFEYSSES (61 aa)). Residues 90–148 (QTNWSMEYSRLKAKIELWERNQRHYLGEDLESISIKELQNLEQQLDTSLKHIPSRKVCK) enclose the K-box; partial domain.

Homodimer capable of binding to CArG-box sequences.

Its subcellular location is the nucleus. Probable transcription factor that promotes early floral meristem identity in synergy with APETALA1, FRUITFULL and LEAFY. Is required subsequently for the transition of an inflorescence meristem into a floral meristem. Seems to be partially redundant to the function of APETALA1. The polypeptide is Truncated transcription factor CAULIFLOWER C (CAL-C) (Brassica oleracea var. botrytis (Cauliflower)).